Consider the following 179-residue polypeptide: Adenine phosphoribosyltransferase (179 aa).

It belongs to the purine/pyrimidine phosphoribosyltransferase family. Homodimer.

It is found in the cytoplasm. The enzyme catalyses AMP + diphosphate = 5-phospho-alpha-D-ribose 1-diphosphate + adenine. The protein operates within purine metabolism; AMP biosynthesis via salvage pathway; AMP from adenine: step 1/1. Functionally, catalyzes a salvage reaction resulting in the formation of AMP, that is energically less costly than de novo synthesis. In Azorhizobium caulinodans (strain ATCC 43989 / DSM 5975 / JCM 20966 / LMG 6465 / NBRC 14845 / NCIMB 13405 / ORS 571), this protein is Adenine phosphoribosyltransferase.